The primary structure comprises 378 residues: Palmitoyltransferase PFA4 (378 aa).

Residues 1 to 9 are Cytoplasmic-facing; it reads MPVKLRWPW. Residues 10-30 traverse the membrane as a helical segment; the sequence is LGIAIPTFLISFIGYGAHYFI. The Lumenal segment spans residues 31–40; sequence LSNFLSVPKQ. A helical membrane pass occupies residues 41-61; the sequence is ITFEFCLSMIWLSYYLAICTN. Residues 62-119 are Cytoplasmic-facing; it reads PGRPLPNYKPPPDIWRNFCKKCQSYKPERSHHCKTCNQCVLMMDHHCPWTMNCVGFAN. The DHHC domain maps to 78–128; sequence NFCKKCQSYKPERSHHCKTCNQCVLMMDHHCPWTMNCVGFANYPHFLRFLF. C108 acts as the S-palmitoyl cysteine intermediate in catalysis. A helical membrane pass occupies residues 120-140; the sequence is YPHFLRFLFWIIVTTSVLFCI. Over 141–164 the chain is Lumenal; sequence QAKRIYFIWQQRHLPGYFFKKSEL. The chain crosses the membrane as a helical span at residues 165 to 185; it reads IFLTISSPLNSFVLLTITILF. The Cytoplasmic portion of the chain corresponds to 186 to 378; the sequence is LRCLFNQILN…DDFGVDVDME (193 aa).

It belongs to the DHHC palmitoyltransferase family. PFA4 subfamily. Post-translationally, autopalmitoylated.

It is found in the endoplasmic reticulum membrane. It carries out the reaction L-cysteinyl-[protein] + hexadecanoyl-CoA = S-hexadecanoyl-L-cysteinyl-[protein] + CoA. Its function is as follows. Mediates the reversible addition of palmitate to target proteins, thereby regulating their membrane association and biological function. Palmitoylates several amino acid permeases. Palmitoylates chitin synthase CHS3, which is required for its proper export from the ER. Can palmitoylate RAS2 in vitro. This Saccharomyces cerevisiae (strain ATCC 204508 / S288c) (Baker's yeast) protein is Palmitoyltransferase PFA4.